Consider the following 462-residue polypeptide: NAD-capped RNA hydrolase NUDT12 (462 aa).

Residue K10 is modified to N6-succinyllysine. ANK repeat units lie at residues 11 to 40 (EMIS…SLLN), 45 to 74 (NGWT…DRSL), and 78 to 98 (ARQT…ANLL). An N6-succinyllysine modification is found at K185. Zn(2+)-binding residues include C284 and C287. K292 is subject to N6-succinyllysine. 2 residues coordinate Zn(2+): C302 and C307. Residues Y318, 354 to 356 (AGF), E370, E374, and E415 contribute to the substrate site. Residues 319-453 (PRVDPVVIMQ…SRAIAHQLIK (135 aa)) enclose the Nudix hydrolase domain. The Mg(2+) site is built by A354, E370, E374, and E415. A Nudix box motif is present at residues 355 to 376 (GFIEPGETIEDAVRREVEEESG). The Microbody targeting signal motif lies at 460–462 (PNL).

Belongs to the Nudix hydrolase family. NudC subfamily. As to quaternary structure, homodimer. Homodimerization is essential for its catalytic activity and protein stability. Interacts (via ANK repeats) with BLMH. Mg(2+) serves as cofactor. Requires Zn(2+) as cofactor. Expressed abundantly in the liver and kidney.

The protein localises to the cytoplasm. It localises to the peroxisome. The protein resides in the cytoplasmic granule. The enzyme catalyses a 5'-end NAD(+)-phospho-ribonucleoside in mRNA + H2O = a 5'-end phospho-adenosine-phospho-ribonucleoside in mRNA + beta-nicotinamide D-ribonucleotide + 2 H(+). The catalysed reaction is NAD(+) + H2O = beta-nicotinamide D-ribonucleotide + AMP + 2 H(+). It catalyses the reaction NADH + H2O = reduced beta-nicotinamide D-ribonucleotide + AMP + 2 H(+). It carries out the reaction NADPH + H2O = reduced beta-nicotinamide D-ribonucleotide + adenosine 2',5'-bisphosphate + 2 H(+). In terms of biological role, mRNA decapping enzyme that specifically removes the nicotinamide adenine dinucleotide (NAD) cap from a subset of mRNAs by hydrolyzing the diphosphate linkage to produce nicotinamide mononucleotide (NMN) and 5' monophosphate mRNA. The NAD-cap is present at the 5'-end of some RNAs; in contrast to the canonical N7 methylguanosine (m7G) cap, the NAD cap promotes mRNA decay. Preferentially acts on NAD-capped transcripts in response to nutrient stress. Also acts on free nicotinamide adenine dinucleotide molecules: hydrolyzes NAD(H) into NMN(H) and AMP, and NADPH into NMNH and 2',5'-ADP. May act to regulate the concentration of peroxisomal nicotinamide nucleotide cofactors required for oxidative metabolism in this organelle. Regulates the levels of circadian clock components PER1, PER2, PER3 and CRY2 in the liver. In Mus musculus (Mouse), this protein is NAD-capped RNA hydrolase NUDT12.